We begin with the raw amino-acid sequence, 609 residues long: Chaperone protein DnaK (609 aa).

The residue at position 173 (T173) is a Phosphothreonine; by autocatalysis. A compositionally biased stretch (basic and acidic residues) spans 525-542 (ENISDEDKKNAEEKKDAL). Disordered stretches follow at residues 525-554 (ENIS…IDDI) and 574-609 (EQAQ…EDKK). Residues 574-587 (EQAQQAQQQGQEEQ) show a composition bias toward low complexity. Positions 597-609 (ADFKEVKDDEDKK) are enriched in basic and acidic residues.

Belongs to the heat shock protein 70 family.

Acts as a chaperone. In Staphylococcus epidermidis (strain ATCC 35984 / DSM 28319 / BCRC 17069 / CCUG 31568 / BM 3577 / RP62A), this protein is Chaperone protein DnaK.